A 332-amino-acid chain; its full sequence is MAVFTAVSDSDLAQWMRHYELGDVLAFRGIPSGIENSNFFLTTTRGEYVLTIFEKLTAEQLPFYLDLMRHLASHGVPVPDPIPRDDGALFGLLHGKPAAIVTKLDGAAELAPGIEHCIEVGQMLARLHLAGRDYARYQPNLRSLPWWRENVPAIVPFVSDAQRTLLEGELAHQAAFFASDDYAALPSGPCHCDLFRDNVLFAHAAPGTGHDVRLGGFFDFYFAGCDKWLFDVAVTVNDWCVDLATGVLDVARADALLRAYQTVRPFTAPERRHWSDMLRAGAYRFWVSRLYDFYLPRAAEMLKPHDPGHFERILRERIANTPALPETHTACN.

This sequence belongs to the pseudomonas-type ThrB family.

The catalysed reaction is L-homoserine + ATP = O-phospho-L-homoserine + ADP + H(+). Its pathway is amino-acid biosynthesis; L-threonine biosynthesis; L-threonine from L-aspartate: step 4/5. The protein is Homoserine kinase of Burkholderia ambifaria (strain ATCC BAA-244 / DSM 16087 / CCUG 44356 / LMG 19182 / AMMD) (Burkholderia cepacia (strain AMMD)).